We begin with the raw amino-acid sequence, 527 residues long: Bifunctional pantoate ligase/cytidylate kinase (527 aa).

Positions 1 to 277 (MRQLISPEAL…VGTARLIDNL (277 aa)) are pantoate--beta-alanine ligase. 27–34 (MGALHAGH) is a binding site for ATP. The active-site Proton donor is the histidine 34. Residue glutamine 58 participates in (R)-pantoate binding. Residue glutamine 58 participates in beta-alanine binding. 147-150 (GEKD) contacts ATP. Position 153 (glutamine 153) interacts with (R)-pantoate. Residues valine 176 and 184 to 187 (LSSR) contribute to the ATP site. The tract at residues 278-527 (TLQGRRPIIA…GQTPSPLSLG (250 aa)) is cytidylate kinase. The interval 507-527 (GLGDSSPQATPGQTPSPLSLG) is disordered. Residues 511 to 527 (SSPQATPGQTPSPLSLG) are compositionally biased toward polar residues.

This sequence in the N-terminal section; belongs to the pantothenate synthetase family. The protein in the C-terminal section; belongs to the cytidylate kinase family. Type 1 subfamily.

The protein localises to the cytoplasm. It catalyses the reaction (R)-pantoate + beta-alanine + ATP = (R)-pantothenate + AMP + diphosphate + H(+). It carries out the reaction CMP + ATP = CDP + ADP. The enzyme catalyses dCMP + ATP = dCDP + ADP. Its pathway is cofactor biosynthesis; (R)-pantothenate biosynthesis; (R)-pantothenate from (R)-pantoate and beta-alanine: step 1/1. Its function is as follows. Catalyzes the condensation of pantoate with beta-alanine in an ATP-dependent reaction via a pantoyl-adenylate intermediate. Functionally, catalyzes the transfer of a phosphate group from ATP to either CMP or dCMP to form CDP or dCDP and ADP, respectively. This chain is Bifunctional pantoate ligase/cytidylate kinase, found in Synechococcus elongatus (strain ATCC 33912 / PCC 7942 / FACHB-805) (Anacystis nidulans R2).